We begin with the raw amino-acid sequence, 218 residues long: Glutathione S-transferase PM239X14 (218 aa).

The GST N-terminal domain maps to 2 to 85 (VTVKLYGMAY…YLVAKYGKGS (84 aa)). Glutathione contacts are provided by residues 12–13 (ST), 41–42 (HK), 55–56 (VI), and 69–70 (ES). Positions 93 to 218 (DPKAYGLFEQ…LLRNSSKEFM (126 aa)) constitute a GST C-terminal domain.

The protein belongs to the GST superfamily. Phi family. As to expression, expressed in vegetative rosettes.

Its subcellular location is the cytoplasm. The protein resides in the cytosol. The catalysed reaction is RX + glutathione = an S-substituted glutathione + a halide anion + H(+). Specifically catalyzes the conjugation of synthetic 1-chloro-2,4-ditrobenzene to GSH. Also functions as a glutathione peroxidase, converting linoleate oxidation products into their corresponding hydroxyacids. This enzyme may thus serve to protect the cell from oxygen toxicity as well as from exogenous toxins such as herbicides. The polypeptide is Glutathione S-transferase PM239X14 (Arabidopsis thaliana (Mouse-ear cress)).